A 970-amino-acid chain; its full sequence is Longitudinals lacking protein, isoforms F/I/K/T (970 aa).

In terms of domain architecture, BTB spans 32-97; the sequence is VDCTLAAEGK…MYRGEVNISQ (66 aa). Disordered regions lie at residues 115-200, 228-340, 447-468, and 790-843; these read LSDN…SSVL, SSGP…ASAS, DAQQ…EGAQ, and QTVH…LQDD. Low complexity-rich tracts occupy residues 162–175, 228–251, 263–293, and 329–340; these read SGDV…SSSP, SSGP…LTST, TSST…QTTS, and NSATGPNPASAS. 2 stretches are compositionally biased toward polar residues: residues 447 to 456 and 808 to 818; these read DAQQRDPQAS and QLQTHHIQTVV. A compositionally biased stretch (low complexity) spans 819–828; that stretch reads QSSSGQQQHD. The C2H2-type 1; degenerate zinc finger occupies 903-925; it reads YVCRHCGKKYRWKSTLRRHENVE. Residues 933–955 form a C2H2-type 2 zinc finger; the sequence is HPCPYCSYKAKQRGNLGVHVRKH.

As to expression, by stage 11, isoform F is expressed throughout the mesoderm whereas isoform T, and at low levels isoform I, is expressed throughout the ectoderm. Isoform K is expressed in both mesoderm and ectoderm. Expression becomes restricted during later stages; starting from stage 14 to 15, isoform F is expressed in the gut. Isoform I is expressed in the CNS. Isoform I and isoform F show expression in the epithelium starting at stage 14, though for isoform I the CNS expression remains predominant. Expression is also seen in specific types of cells in the embryo; isoform K is expressed in the ventral furrow at stage 5 and in a dynamic pattern in the ventral neurogenic region starting at stage 7. Isoform T is expressed around the tracheal pits at stage 11. Isoform F shows transient enrichment in a dorsal cell layer in the CNS at stages 13 and 14.

It localises to the nucleus. Functionally, putative transcription factor required for axon growth and guidance in the central and peripheral nervous systems. Repels CNS axons away from the midline by promoting the expression of the midline repellent sli and its receptor robo. This chain is Longitudinals lacking protein, isoforms F/I/K/T, found in Drosophila melanogaster (Fruit fly).